We begin with the raw amino-acid sequence, 165 residues long: Endoribonuclease YbeY (165 aa).

Residues H130, H134, and H140 each coordinate Zn(2+).

This sequence belongs to the endoribonuclease YbeY family. Zn(2+) is required as a cofactor.

The protein localises to the cytoplasm. Functionally, single strand-specific metallo-endoribonuclease involved in late-stage 70S ribosome quality control and in maturation of the 3' terminus of the 16S rRNA. In Streptococcus sanguinis (strain SK36), this protein is Endoribonuclease YbeY.